Here is a 129-residue protein sequence, read N- to C-terminus: Small ribosomal subunit protein uS11 (129 aa).

This sequence belongs to the universal ribosomal protein uS11 family. Part of the 30S ribosomal subunit. Interacts with proteins S7 and S18. Binds to IF-3.

In terms of biological role, located on the platform of the 30S subunit, it bridges several disparate RNA helices of the 16S rRNA. Forms part of the Shine-Dalgarno cleft in the 70S ribosome. The polypeptide is Small ribosomal subunit protein uS11 (Colwellia psychrerythraea (strain 34H / ATCC BAA-681) (Vibrio psychroerythus)).